A 565-amino-acid polypeptide reads, in one-letter code: FACT complex subunit ctc-1 (565 aa).

Disordered regions lie at residues 151-173 (GNDGGKSNGHSGTGGKGKKASAG) and 477-565 (LGDD…KKTA). Over residues 152–165 (NDGGKSNGHSGTGG) the composition is skewed to gly residues. 3 stretches are compositionally biased toward acidic residues: residues 478–489 (GDDDMASSDEEA), 500–522 (DEDEESVDEDFQAESESDVAEEY), and 532–553 (GSEESDVDNRVDDEDEDMDDDE).

This sequence belongs to the SSRP1 family. In terms of assembly, forms a stable heterodimer with ctc-2/spt16. The dimer of ctc-1 and ctc-2 weakly associates with multiple molecules of nhp-1/nhp6 to form the FACT complex.

It is found in the nucleus. It localises to the chromosome. In terms of biological role, component of the FACT complex, a general chromatin factor that acts to reorganize nucleosomes. The FACT complex is involved in multiple processes that require DNA as a template such as mRNA elongation, DNA replication and DNA repair. During transcription elongation the FACT complex acts as a histone chaperone that both destabilizes and restores nucleosomal structure. It facilitates the passage of RNA polymerase II and transcription by promoting the dissociation of one histone H2A-H2B dimer from the nucleosome, then subsequently promotes the reestablishment of the nucleosome following the passage of RNA polymerase II. This Neurospora crassa (strain ATCC 24698 / 74-OR23-1A / CBS 708.71 / DSM 1257 / FGSC 987) protein is FACT complex subunit ctc-1 (ctc-1).